The sequence spans 156 residues: Ribosomal RNA large subunit methyltransferase H (156 aa).

S-adenosyl-L-methionine is bound by residues Leu73, Gly104, and 123 to 128; that span reads LSPLTL.

Belongs to the RNA methyltransferase RlmH family. Homodimer.

Its subcellular location is the cytoplasm. It catalyses the reaction pseudouridine(1915) in 23S rRNA + S-adenosyl-L-methionine = N(3)-methylpseudouridine(1915) in 23S rRNA + S-adenosyl-L-homocysteine + H(+). In terms of biological role, specifically methylates the pseudouridine at position 1915 (m3Psi1915) in 23S rRNA. This Serratia proteamaculans (strain 568) protein is Ribosomal RNA large subunit methyltransferase H.